We begin with the raw amino-acid sequence, 269 residues long: Formamidopyrimidine-DNA glycosylase (269 aa).

Pro2 acts as the Schiff-base intermediate with DNA in catalysis. Catalysis depends on Glu3, which acts as the Proton donor. Lys57 serves as the catalytic Proton donor; for beta-elimination activity. His90, Arg109, and Lys150 together coordinate DNA. The segment at Gln235–Lys269 adopts an FPG-type zinc-finger fold. Arg259 functions as the Proton donor; for delta-elimination activity in the catalytic mechanism.

Belongs to the FPG family. As to quaternary structure, monomer. It depends on Zn(2+) as a cofactor.

It catalyses the reaction Hydrolysis of DNA containing ring-opened 7-methylguanine residues, releasing 2,6-diamino-4-hydroxy-5-(N-methyl)formamidopyrimidine.. It carries out the reaction 2'-deoxyribonucleotide-(2'-deoxyribose 5'-phosphate)-2'-deoxyribonucleotide-DNA = a 3'-end 2'-deoxyribonucleotide-(2,3-dehydro-2,3-deoxyribose 5'-phosphate)-DNA + a 5'-end 5'-phospho-2'-deoxyribonucleoside-DNA + H(+). Its function is as follows. Involved in base excision repair of DNA damaged by oxidation or by mutagenic agents. Acts as a DNA glycosylase that recognizes and removes damaged bases. Has a preference for oxidized purines, such as 7,8-dihydro-8-oxoguanine (8-oxoG). Has AP (apurinic/apyrimidinic) lyase activity and introduces nicks in the DNA strand. Cleaves the DNA backbone by beta-delta elimination to generate a single-strand break at the site of the removed base with both 3'- and 5'-phosphates. The polypeptide is Formamidopyrimidine-DNA glycosylase (Photobacterium profundum (strain SS9)).